Reading from the N-terminus, the 450-residue chain is Tripartite motif-containing protein 77 (450 aa).

An RING-type zinc finger spans residues 15-56 (CSICTDYLTDPVTICCGHRFCSPCLCLLWEDTLTPNCCPVCR). A B box-type zinc finger spans residues 88–131 (SAMLICRRHQEIKNLICETDRSLLCFLCSQSPRHATHKHYMTRE). Positions 93, 96, 115, and 121 each coordinate Zn(2+). Residues 269–450 (QLSAWTITGV…LRPFICHGSK (182 aa)) form the B30.2/SPRY domain.

This sequence belongs to the TRIM/RBCC family.

The chain is Tripartite motif-containing protein 77 (TRIM77) from Homo sapiens (Human).